The chain runs to 151 residues: MPKYYCDYCDTYLTHDSPSVRKTHCTGRKHKDNVKFYYQKWMEEQAQHLIDATTAAYKAGKIAQNPFTAGPPKPNISIPPPTMNMPPRPGIIPGMPAGAPPLLMGPNGPLPPPMMGMRPPPMMVPTMGMPPMGLGMRPPVMSAAPPQLNPK.

The Matrin-type zinc-finger motif lies at 4 to 36 (YYCDYCDTYLTHDSPSVRKTHCTGRKHKDNVKF).

This sequence belongs to the U1 small nuclear ribonucleoprotein C family. U1 snRNP is composed of the 7 core Sm proteins B/B', D1, D2, D3, E, F and G that assemble in a heptameric protein ring on the Sm site of the small nuclear RNA to form the core snRNP, and at least 3 U1 snRNP-specific proteins U1-70K, U1-A and U1-C. U1-C interacts with U1 snRNA and the 5' splice-site region of the pre-mRNA.

It localises to the nucleus. Its function is as follows. Component of the spliceosomal U1 snRNP, which is essential for recognition of the pre-mRNA 5' splice-site and the subsequent assembly of the spliceosome. U1-C is directly involved in initial 5' splice-site recognition for both constitutive and regulated alternative splicing. The interaction with the 5' splice-site seems to precede base-pairing between the pre-mRNA and the U1 snRNA. Stimulates commitment or early (E) complex formation by stabilizing the base pairing of the 5' end of the U1 snRNA and the 5' splice-site region. This Anopheles darlingi (Mosquito) protein is U1 small nuclear ribonucleoprotein C.